A 66-amino-acid polypeptide reads, in one-letter code: Large ribosomal subunit protein bL35 (66 aa).

A disordered region spans residues 25–45; sequence QAAGKRHGMSKRPQKMKRNAR. Residues 28-44 are compositionally biased toward basic residues; it reads GKRHGMSKRPQKMKRNA.

It belongs to the bacterial ribosomal protein bL35 family.

In Rhodospirillum centenum (strain ATCC 51521 / SW), this protein is Large ribosomal subunit protein bL35.